The following is a 164-amino-acid chain: Large ribosomal subunit protein bL9 (164 aa).

It belongs to the bacterial ribosomal protein bL9 family.

In terms of biological role, binds to the 23S rRNA. This chain is Large ribosomal subunit protein bL9, found in Borrelia hermsii (strain HS1 / DAH).